A 433-amino-acid chain; its full sequence is ATP-dependent protease ATPase subunit HslU (433 aa).

ATP is bound by residues V18, 60 to 65 (GVGKTE), D246, E311, and R383.

This sequence belongs to the ClpX chaperone family. HslU subfamily. As to quaternary structure, a double ring-shaped homohexamer of HslV is capped on each side by a ring-shaped HslU homohexamer. The assembly of the HslU/HslV complex is dependent on binding of ATP.

It is found in the cytoplasm. Its function is as follows. ATPase subunit of a proteasome-like degradation complex; this subunit has chaperone activity. The binding of ATP and its subsequent hydrolysis by HslU are essential for unfolding of protein substrates subsequently hydrolyzed by HslV. HslU recognizes the N-terminal part of its protein substrates and unfolds these before they are guided to HslV for hydrolysis. The protein is ATP-dependent protease ATPase subunit HslU of Rhodopseudomonas palustris (strain ATCC BAA-98 / CGA009).